The primary structure comprises 160 residues: Transcription elongation factor GreA (160 aa).

Positions 49–73 (HAAKEEQSHNEGRIADLEDKLARAD) form a coiled coil.

Belongs to the GreA/GreB family.

In terms of biological role, necessary for efficient RNA polymerase transcription elongation past template-encoded arresting sites. The arresting sites in DNA have the property of trapping a certain fraction of elongating RNA polymerases that pass through, resulting in locked ternary complexes. Cleavage of the nascent transcript by cleavage factors such as GreA or GreB allows the resumption of elongation from the new 3'terminus. GreA releases sequences of 2 to 3 nucleotides. This Rhodopseudomonas palustris (strain BisA53) protein is Transcription elongation factor GreA.